A 461-amino-acid polypeptide reads, in one-letter code: PE-PGRS family protein PE_PGRS45 (461 aa).

In terms of domain architecture, PE spans 4–92 (VNVAPQLVST…GSTYAVAEAA (89 aa)). 2 disordered regions span residues 232–251 (GGAG…GGNG) and 426–461 (AGSL…GADG). The segment covering 434–446 (PGFGGPGGSGGAS) has biased composition (gly residues).

Belongs to the mycobacterial PE family. PGRS subfamily. In terms of assembly, interacts with human TIMM23, which is part of a complex that mediates the translocation of transit peptide-containing proteins across the mitochondrial inner membrane.

It is found in the cell membrane. The protein resides in the secreted. It localises to the cell wall. Its subcellular location is the host mitochondrion. The enzyme catalyses hexadecanal + NADP(+) + CoA = hexadecanoyl-CoA + NADPH + H(+). With respect to regulation, oxidoreductase activity is inhibited by the first line anti-tubercular drug isoniazid (INH). Its function is as follows. May be an effector protein that contributes to pathogenesis by targeting host mitochondria, where it modulates host cellular processes. In THP1 macrophages, increases the ADP-to-ATP ratio and increases the cellular ROS levels. Also induces mitochondrial perturbations through membrane depolarization, release of mitochondrial superoxide, up-regulation of expression of host proapoptotic proteins (BAX and BIM) and release of cytochrome C into the cytosol. May bind calcium to increase intracellular calcium influx, which may further lead to mitochondrial perturbations. Mitochondrial perturbations and alteration of Ca(2+) influx are independent but simultaneous events. In vitro, shows NADPH-dependent fatty acyl coenzyme A oxidoreductase activity. Can oxidize palmitoyl-CoA, but not glutathione and thiourea. The protein is PE-PGRS family protein PE_PGRS45 of Mycobacterium tuberculosis (strain ATCC 25618 / H37Rv).